Consider the following 337-residue polypeptide: tRNA N6-adenosine threonylcarbamoyltransferase (337 aa).

Fe cation-binding residues include His-111 and His-115. Residues 134–138 (LVSGG), Asp-167, Gly-180, and Asn-272 contribute to the substrate site. Asp-300 contacts Fe cation.

This sequence belongs to the KAE1 / TsaD family. Fe(2+) is required as a cofactor.

It localises to the cytoplasm. It carries out the reaction L-threonylcarbamoyladenylate + adenosine(37) in tRNA = N(6)-L-threonylcarbamoyladenosine(37) in tRNA + AMP + H(+). Functionally, required for the formation of a threonylcarbamoyl group on adenosine at position 37 (t(6)A37) in tRNAs that read codons beginning with adenine. Is involved in the transfer of the threonylcarbamoyl moiety of threonylcarbamoyl-AMP (TC-AMP) to the N6 group of A37, together with TsaE and TsaB. TsaD likely plays a direct catalytic role in this reaction. This is tRNA N6-adenosine threonylcarbamoyltransferase from Citrobacter koseri (strain ATCC BAA-895 / CDC 4225-83 / SGSC4696).